A 101-amino-acid polypeptide reads, in one-letter code: Ubiquitin-like protein SMT3 (101 aa).

The residue at position 2 (S2) is an N-acetylserine. Phosphoserine occurs at positions 2 and 4. Positions 22-98 (THINLKVSDG…IEAHREQIGG (77 aa)) constitute a Ubiquitin-like domain. G98 is covalently cross-linked (Glycyl lysine isopeptide (Gly-Lys) (interchain with K-? in acceptor proteins)). The propeptide occupies 99–101 (ATY).

This sequence belongs to the ubiquitin family. SUMO subfamily. In terms of assembly, activated by a E1 ligase composed of AOS1 and UBA2.

Functionally, not known; suppressor of MIF2 mutations. The chain is Ubiquitin-like protein SMT3 (SMT3) from Saccharomyces cerevisiae (strain ATCC 204508 / S288c) (Baker's yeast).